The chain runs to 351 residues: Foldase protein PrsA 1 (351 aa).

An N-terminal signal peptide occupies residues 1-22; that stretch reads MKNSNKLIASVVTLASVMALAA. Cys-23 carries the N-palmitoyl cysteine lipid modification. A lipid anchor (S-diacylglycerol cysteine) is attached at Cys-23. A PpiC domain is found at 145–240; sequence TPTMAVEMIT…KKFYIVKVTK (96 aa). 2 stretches are compositionally biased toward low complexity: residues 303–317 and 326–351; these read KTKA…SESS and ESEQ…PAAQ. The disordered stretch occupies residues 303–351; the sequence is KTKAASESSTTSESSKAAEENPSESEQTQTSSAEEPTETEAQTQEPAAQ.

This sequence belongs to the PrsA family.

The protein resides in the cell membrane. The enzyme catalyses [protein]-peptidylproline (omega=180) = [protein]-peptidylproline (omega=0). Functionally, plays a major role in protein secretion by helping the post-translocational extracellular folding of several secreted proteins. In Streptococcus pyogenes serotype M6 (strain ATCC BAA-946 / MGAS10394), this protein is Foldase protein PrsA 1.